Reading from the N-terminus, the 915-residue chain is Protein translocase subunit SecA (915 aa).

ATP contacts are provided by residues Q87, 105 to 109 (GEGKT), and D516. The segment at 866–915 (MTYGAPSDGDIGGSVEDEPLELPEGARVGRNDPCPCGSGKKYKQCHGKLS) is disordered. Residues C899, C901, C910, and H911 each contribute to the Zn(2+) site. The span at 905–915 (KKYKQCHGKLS) shows a compositional bias: basic residues.

It belongs to the SecA family. In terms of assembly, monomer and homodimer. Part of the essential Sec protein translocation apparatus which comprises SecA, SecYEG and auxiliary proteins SecDF-YajC and YidC. It depends on Zn(2+) as a cofactor.

It localises to the cell inner membrane. Its subcellular location is the cytoplasm. It carries out the reaction ATP + H2O + cellular proteinSide 1 = ADP + phosphate + cellular proteinSide 2.. Its function is as follows. Part of the Sec protein translocase complex. Interacts with the SecYEG preprotein conducting channel. Has a central role in coupling the hydrolysis of ATP to the transfer of proteins into and across the cell membrane, serving both as a receptor for the preprotein-SecB complex and as an ATP-driven molecular motor driving the stepwise translocation of polypeptide chains across the membrane. The sequence is that of Protein translocase subunit SecA from Delftia acidovorans (strain DSM 14801 / SPH-1).